A 240-amino-acid chain; its full sequence is UDP-2,3-diacylglucosamine hydrolase (240 aa).

Residues Asp-8, His-10, Asp-41, Asn-78, and His-113 each contribute to the Mn(2+) site. 78-79 (NR) is a binding site for substrate. Substrate contacts are provided by Asp-121, Ser-159, Asn-163, Lys-166, and His-194. Mn(2+) contacts are provided by His-194 and His-196.

The protein belongs to the LpxH family. Mn(2+) serves as cofactor.

Its subcellular location is the cell inner membrane. The enzyme catalyses UDP-2-N,3-O-bis[(3R)-3-hydroxytetradecanoyl]-alpha-D-glucosamine + H2O = 2-N,3-O-bis[(3R)-3-hydroxytetradecanoyl]-alpha-D-glucosaminyl 1-phosphate + UMP + 2 H(+). Its pathway is glycolipid biosynthesis; lipid IV(A) biosynthesis; lipid IV(A) from (3R)-3-hydroxytetradecanoyl-[acyl-carrier-protein] and UDP-N-acetyl-alpha-D-glucosamine: step 4/6. Functionally, hydrolyzes the pyrophosphate bond of UDP-2,3-diacylglucosamine to yield 2,3-diacylglucosamine 1-phosphate (lipid X) and UMP by catalyzing the attack of water at the alpha-P atom. Involved in the biosynthesis of lipid A, a phosphorylated glycolipid that anchors the lipopolysaccharide to the outer membrane of the cell. The chain is UDP-2,3-diacylglucosamine hydrolase from Shewanella baltica (strain OS223).